A 134-amino-acid chain; its full sequence is Transcription factor atoh7 (134 aa).

Positions 1-27 (MKPRRPSCADSGSDSDSRDPEKFESAM) are disordered. Positions 15–27 (SDSRDPEKFESAM) are enriched in basic and acidic residues. The bHLH domain occupies 28–80 (RRRMAANARERKRMQGLNTAFDRLRKVVPQWGQDKKLSKYETLQMALSYIMAL).

It localises to the nucleus. It is found in the perikaryon. The protein localises to the cell projection. Its subcellular location is the axon. Functionally, transcription factor that binds to DNA at the consensus sequence 5'-CAG[GC]TG-3'. Involved in the differentiation of retinal ganglion cells, photoreceptor population and optic nerve development. Required for retinal circadian rhythm photoentrainment. The polypeptide is Transcription factor atoh7 (Danio rerio (Zebrafish)).